Here is a 282-residue protein sequence, read N- to C-terminus: DNA-3-methyladenine glycosylase 2 (282 aa).

Asp238 serves as the catalytic Proton acceptor.

It belongs to the alkylbase DNA glycosidase AlkA family. As to quaternary structure, monomer.

The catalysed reaction is Hydrolysis of alkylated DNA, releasing 3-methyladenine, 3-methylguanine, 7-methylguanine and 7-methyladenine.. Functionally, hydrolysis of the deoxyribose N-glycosidic bond to excise 3-methyladenine, 3-methylguanine, 7-methylguanine, O2-methylthymine, and O2-methylcytosine from the damaged DNA polymer formed by alkylation lesions. This chain is DNA-3-methyladenine glycosylase 2 (alkA), found in Escherichia coli (strain K12).